The chain runs to 90 residues: YcgL domain-containing protein plu2139 (90 aa).

Residues 1–85 (MICAIYSSPK…PVENLMNAHL (85 aa)) form the YcgL domain.

The chain is YcgL domain-containing protein plu2139 from Photorhabdus laumondii subsp. laumondii (strain DSM 15139 / CIP 105565 / TT01) (Photorhabdus luminescens subsp. laumondii).